Reading from the N-terminus, the 426-residue chain is Pannexin-1 (426 aa).

Over 1 to 40 the chain is Cytoplasmic; sequence MAIAQLATEYVFSDFLLKEPTEPKFKGLRLELAVDKMVTC. Cys-40 is subject to S-nitrosocysteine. The chain crosses the membrane as a helical span at residues 41 to 61; the sequence is IAVGLPLLLISLAFAQEISIG. Residues 62 to 106 lie on the Extracellular side of the membrane; the sequence is TQISCFSPSSFSWRQAAFVDSYCWAAVQQKNSLQSESGNLPLWLH. 2 disulfides stabilise this stretch: Cys-66-Cys-265 and Cys-84-Cys-246. The chain crosses the membrane as a helical span at residues 107–127; sequence KFFPYILLLFAILLYLPPLFW. The Cytoplasmic segment spans residues 128-217; that stretch reads RFAAAPHICS…NLIIKYISCR (90 aa). Position 199 is a phosphotyrosine (Tyr-199). The chain crosses the membrane as a helical span at residues 218-238; that stretch reads LLTLIIILLACIYLGYYFSLS. The Extracellular portion of the chain corresponds to 239–266; the sequence is SLSDEFVCSIKSGILRNDSTVPDQFQCK. An N-linked (GlcNAc...) asparagine glycan is attached at Asn-255. Residues 267–287 form a helical membrane-spanning segment; the sequence is LIAVGIFQLLSVINLVVYVLL. The Cytoplasmic portion of the chain corresponds to 288 to 426; the sequence is APVVVYTLFV…ARQRLLDSSC (139 aa). Cys-347 bears the S-nitrosocysteine mark. Residues 405 to 414 are compositionally biased toward polar residues; that stretch reads DSETKANNGE. The interval 405–426 is disordered; it reads DSETKANNGEKNARQRLLDSSC. Over residues 415–426 the composition is skewed to basic and acidic residues; it reads KNARQRLLDSSC.

This sequence belongs to the pannexin family. In terms of assembly, homoheptameric. Post-translationally, S-nitrosylation inhibits channel currents and ATP release. N-glycosylation plays a role in cell surface targeting. Glycosylation at its extracellular surface makes unlikely that two oligomers could dock to form an intercellular channel such as in gap junctions. Exists in three glycosylation states: non-glycosylated (GLY0), high-mannose glycosylated (GLY1), and fully mature glycosylated (GLY2). In terms of processing, cleaved by CASP3 and CASP7 during apoptosis. Cleavage opens the channel for the release of metabolites and induces plasma membrane permeability during apoptosis. Post-translationally, phosphorylated at Tyr-199 by SRC. Phosphorylation activates ATP release. Constitutively phosphorylated in vascular smooth muscle cells. As to expression, widely expressed. Highest expression is observed in oocytes and brain. Detected at very low levels in sperm cells.

It localises to the cell membrane. It is found in the endoplasmic reticulum membrane. The catalysed reaction is chloride(in) = chloride(out). The enzyme catalyses iodide(out) = iodide(in). It carries out the reaction ATP(in) = ATP(out). It catalyses the reaction K(+)(in) = K(+)(out). The catalysed reaction is Ca(2+)(in) = Ca(2+)(out). The enzyme catalyses Na(+)(in) = Na(+)(out). It carries out the reaction nitrate(in) = nitrate(out). It catalyses the reaction L-aspartate(out) = L-aspartate(in). The catalysed reaction is L-glutamate(out) = L-glutamate(in). The enzyme catalyses D-gluconate(in) = D-gluconate(out). It carries out the reaction spermidine(in) = spermidine(out). Functionally, ion channel involved in a variety of physiological functions such as blood pressure regulation, apoptotic cell clearance and oogenesis. Forms anion-selective channels with relatively low conductance and an order of permeabilities: nitrate&gt;iodide&gt;chlroride&gt;&gt;aspartate=glutamate=gluconate. Can release ATP upon activation through phosphorylation or cleavage at C-terminus. May play a role as a Ca(2+)-leak channel to regulate ER Ca(2+) homeostasis. Its function is as follows. During apoptosis, the C terminal tail is cleaved by caspases, which opens the main pore acting as a large-pore ATP efflux channel with a broad distribution, which allows the regulated release of molecules and ions smaller than 1 kDa, such as nucleotides ATP and UTP, and selective plasma membrane permeability to attract phagocytes that engulf the dying cells. In Homo sapiens (Human), this protein is Pannexin-1.